The sequence spans 466 residues: 3-isopropylmalate dehydratase large subunit (466 aa).

Residues Cys347, Cys407, and Cys410 each contribute to the [4Fe-4S] cluster site.

It belongs to the aconitase/IPM isomerase family. LeuC type 1 subfamily. As to quaternary structure, heterodimer of LeuC and LeuD. [4Fe-4S] cluster is required as a cofactor.

The enzyme catalyses (2R,3S)-3-isopropylmalate = (2S)-2-isopropylmalate. It functions in the pathway amino-acid biosynthesis; L-leucine biosynthesis; L-leucine from 3-methyl-2-oxobutanoate: step 2/4. Functionally, catalyzes the isomerization between 2-isopropylmalate and 3-isopropylmalate, via the formation of 2-isopropylmaleate. This Shewanella pealeana (strain ATCC 700345 / ANG-SQ1) protein is 3-isopropylmalate dehydratase large subunit.